The sequence spans 391 residues: Processive diacylglycerol beta-glucosyltransferase (391 aa).

This sequence belongs to the glycosyltransferase 28 family. UgtP subfamily.

The protein resides in the cell membrane. The catalysed reaction is a 1,2-diacyl-3-O-(beta-D-glucopyranosyl)-sn-glycerol + UDP-alpha-D-glucose = a 1,2-diacyl-3-O-(beta-D-Glc-(1-&gt;6)-beta-D-Glc)-sn-glycerol + UDP + H(+). It catalyses the reaction a 1,2-diacyl-sn-glycerol + UDP-alpha-D-glucose = a 1,2-diacyl-3-O-(beta-D-glucopyranosyl)-sn-glycerol + UDP + H(+). Its pathway is glycolipid metabolism; diglucosyl-diacylglycerol biosynthesis. Functionally, processive glucosyltransferase involved in the biosynthesis of both the bilayer- and non-bilayer-forming membrane glucolipids. Is able to successively transfer two glucosyl residues to diacylglycerol (DAG), thereby catalyzing the formation of beta-monoglucosyl-DAG (3-O-(beta-D-glucopyranosyl)-1,2-diacyl-sn-glycerol) and beta-diglucosyl-DAG (3-O-(beta-D-glucopyranosyl-beta-(1-&gt;6)-D-glucopyranosyl)-1,2-diacyl-sn-glycerol). Beta-diglucosyl-DAG is the predominant glycolipid found in Bacillales and is also used as a membrane anchor for lipoteichoic acid (LTA). In Staphylococcus aureus (strain bovine RF122 / ET3-1), this protein is Processive diacylglycerol beta-glucosyltransferase.